We begin with the raw amino-acid sequence, 128 residues long: Probable 4-amino-4-deoxy-L-arabinose-phosphoundecaprenol flippase subunit ArnF (128 aa).

The Cytoplasmic segment spans residues 1 to 2 (MG). A helical membrane pass occupies residues 3–23 (LIWGLFSVIIASVAQLSLGFA). The Periplasmic portion of the chain corresponds to 24 to 35 (ASHLPPMTHLWD). Residues 36 to 56 (FIAALLAFGLDARILLLGLLG) form a helical membrane-spanning segment. Residues 57-76 (YLLSVFCWYKTLHKLALSKA) lie on the Cytoplasmic side of the membrane. The helical transmembrane segment at 77-97 (YALLSMSYVLVWIASMVLPGW) threads the bilayer. The Periplasmic portion of the chain corresponds to 98–100 (EGT). A helical transmembrane segment spans residues 101 to 121 (FSLKALLGVACIMSGLMLIFL). Residues 122 to 128 (PTTKQRY) are Cytoplasmic-facing.

It belongs to the ArnF family. As to quaternary structure, heterodimer of ArnE and ArnF.

It localises to the cell inner membrane. It functions in the pathway bacterial outer membrane biogenesis; lipopolysaccharide biosynthesis. In terms of biological role, translocates 4-amino-4-deoxy-L-arabinose-phosphoundecaprenol (alpha-L-Ara4N-phosphoundecaprenol) from the cytoplasmic to the periplasmic side of the inner membrane. The protein is Probable 4-amino-4-deoxy-L-arabinose-phosphoundecaprenol flippase subunit ArnF of Shigella boydii serotype 4 (strain Sb227).